Reading from the N-terminus, the 409-residue chain is tRNA-specific 2-thiouridylase MnmA (409 aa).

ATP is bound by residues 40-47 (GLSGGVDS) and Leu-66. The active-site Nucleophile is Cys-127. Cys-127 and Cys-237 are disulfide-bonded. Residue Gly-152 coordinates ATP. The tract at residues 156–179 (RIRHREDPEPQQALPGDSSGRHQL) is disordered. Residues 187 to 189 (KDQ) form an interaction with tRNA region. Residue Cys-237 is the Cysteine persulfide intermediate of the active site. The tract at residues 342–343 (RY) is interaction with tRNA.

Belongs to the MnmA/TRMU family.

It localises to the cytoplasm. It catalyses the reaction S-sulfanyl-L-cysteinyl-[protein] + uridine(34) in tRNA + AH2 + ATP = 2-thiouridine(34) in tRNA + L-cysteinyl-[protein] + A + AMP + diphosphate + H(+). Catalyzes the 2-thiolation of uridine at the wobble position (U34) of tRNA, leading to the formation of s(2)U34. In Prochlorococcus marinus (strain MIT 9303), this protein is tRNA-specific 2-thiouridylase MnmA.